We begin with the raw amino-acid sequence, 284 residues long: MASYPYRQGCPGAAGQAPGAPPGSYYPGPPNSGGQYGSGLPPGGGYGGPAPGGPYGPPAGGGPYGHPNPGMFPSGTPGGPYGGAAPGGPYGQPPPSSYGAQQPGLYGQGGAPPNVDPEAYSWFQSVDSDHSGYISMKELKQALVNCNWSSFNDETCLMMINMFDKTKSGRIDVYGFSALWKFIQQWKNLFQQYDRDRSGSISYTELQQALSQMGYNLSPQFTQLLVSRYCPRSANPAMQLDRFIQVCTQLQVLTEAFREKDTAVQGNIRLSFEDFVTMTASRML.

The segment at 1 to 111 is disordered; sequence MASYPYRQGC…QPGLYGQGGA (111 aa). Over residues 8-26 the composition is skewed to low complexity; that stretch reads QGCPGAAGQAPGAPPGSYY. 9 repeat units span residues 21-29, 31-39, 41-49, 50-58, 59-67, 76-84, 85-92, 93-100, and 101-109. Residues 21-109 form a 9 X 9 AA approximate tandem repeat of [AP]-P-G-G-P-Y-G-G-P-P region; it reads PPGSYYPGPP…AQQPGLYGQG (89 aa). The segment covering 34-50 has biased composition (gly residues); sequence GQYGSGLPPGGGYGGPA. A compositionally biased stretch (low complexity) spans 65–75; the sequence is GHPNPGMFPSG. Over residues 76–90 the composition is skewed to gly residues; that stretch reads TPGGPYGGAAPGGPY. EF-hand domains follow at residues 114–149, 155–183, 181–216, 217–253, and 254–283; these read NVDP…CNWS, TCLM…WKFI, KFIQ…MGYN, LSPQ…LQVL, and TEAF…ASRM. Ca(2+)-binding residues include aspartate 127, aspartate 129, serine 131, and tyrosine 133. Residue lysine 137 forms a Glycyl lysine isopeptide (Lys-Gly) (interchain with G-Cter in ubiquitin) linkage. Glutamate 138 is a binding site for Ca(2+). Ca(2+) is bound by residues aspartate 194, aspartate 196, serine 198, serine 200, and glutamate 205. A required for interaction with PDCD6 region spans residues 204 to 284; it reads TELQQALSQM…FVTMTASRML (81 aa).

As to quaternary structure, heterodimer; heterodimerizes (via the EF-hand 5) with PDCD6. Dissociates from PDCD6 in presence of calcium. Ubiquitinated by the BCR(KLHL12) E3 ubiquitin ligase complex.

Its subcellular location is the cytoplasm. It localises to the endoplasmic reticulum. It is found in the membrane. The protein localises to the cytoplasmic vesicle. The protein resides in the COPII-coated vesicle membrane. Functionally, calcium-binding protein that acts as an adapter that bridges unrelated proteins or stabilizes weak protein-protein complexes in response to calcium. Together with PDCD6, acts as a calcium-dependent adapter for the BCR(KLHL12) complex, a complex involved in endoplasmic reticulum (ER)-Golgi transport by regulating the size of COPII coats. In response to cytosolic calcium increase, the heterodimer formed with PDCD6 interacts with, and bridges together the BCR(KLHL12) complex and SEC31 (SEC31A or SEC31B), promoting monoubiquitination of SEC31 and subsequent collagen export, which is required for neural crest specification. Its role in the heterodimer formed with PDCD6 is however unclear: some evidence shows that PEF1 and PDCD6 work together and promote association between PDCD6 and SEC31 in presence of calcium. Other reports show that PEF1 dissociates from PDCD6 in presence of calcium, and may act as a negative regulator of PDCD6. Also acts as a negative regulator of ER-Golgi transport; possibly by inhibiting interaction between PDCD6 and SEC31. The chain is Peflin from Homo sapiens (Human).